Consider the following 309-residue polypeptide: Homoserine O-succinyltransferase (309 aa).

Cys142 acts as the Acyl-thioester intermediate in catalysis. The substrate site is built by Lys163 and Ser192. The active-site Proton acceptor is His235. Residue Glu237 is part of the active site. Arg249 is a binding site for substrate.

It belongs to the MetA family.

It localises to the cytoplasm. The enzyme catalyses L-homoserine + succinyl-CoA = O-succinyl-L-homoserine + CoA. Its pathway is amino-acid biosynthesis; L-methionine biosynthesis via de novo pathway; O-succinyl-L-homoserine from L-homoserine: step 1/1. In terms of biological role, transfers a succinyl group from succinyl-CoA to L-homoserine, forming succinyl-L-homoserine. The sequence is that of Homoserine O-succinyltransferase from Pectobacterium carotovorum subsp. carotovorum (strain PC1).